The chain runs to 1039 residues: MVMVDALNLGRRLRVRSTAYVAGEPVPFSWPMRTFISRNPLYGLEHMPFEQAVRRGAELFHARMFLPRSDYQRWQREGKVRQDTLAEEIARRAQALPAVPGIDWPRWLQALMQSAHDRDVVVPGVRAPDVHAALHGQPPSAQAVDVAVLLPALEQRLHGLTLPEAVDALWGTRLADELDELVIKSYLDFFDEDQSSWRMPGRERGLFAAWSEIAQRNARMFLRRLHVRRTLGRVQDPESAVVHVMEEMGIDPDAWSAYFTRELTRLYGWTGFVRWRSSAKHYYWAQRYPAEVVDLLAVRLVVGLALLQESARHRRTPVRREQLDALLHERGAECLLRNALHSGEVLPDWAQRIDDTLSRGGSKRCEALLQRYWPLWQARQGQDQAAALRELAAAADATAALEVLSPEDIAGLIQGLQEFARQEGMVWTLAMEAQAIDQLLAQVQVPQDLAAGKRPFAQAWFCIDVRAEPIRRHLERVGDYQTFGIAGFFGVPVGFLGYGKGSESHFCPAVVTPKNLVLELPAELDPEEDDLLSTLGHVLHDLKSSVLSPYVTVEAVGMLFGLDLFGKTLAPLGYSRWRNRIDADKPVTRLLVDKLTREQADSIIRTLQRAMIVKALHAELHIERERVDDDMIRELRETALRHREGPTRLQRTFGVSDKQEAEFIDKLREVYRVDADYASYQLVRLGRIGYSLDEQVNYVHTALTMIGLTKTFSRFVLIVGHSGQTENNPYESALDCGACGGASGLVNARVLAQMANKTAVRERLRGMGIDIPDDTWFLPALHNTTTDAIELSDLVLLPPRHLVYLDRLRNGLRAASRLAAAERMPKLLPQARAIEPAQAWRLAHRLAVDWAQVRPEWGLSKNVYGIIGRRSLSERADLQGRPFLMSYDWRCDPKGRLLENLLAAPVVVGQWINLEYFFSTVDNARLGSGSKAYHNVAGRFGVMTGSLSDLRTGLPAQTVMREGQPYHEPMRMIALIEAPLDFAGRALQSVVKVKSLVLGGWIRAIVIDPTQGYKPFVFNNGQWEERPPLVAPAEEEHAA.

Residues cysteine 462, aspartate 464, histidine 721, and cysteine 736 each contribute to the Zn(2+) site.

Belongs to the inorganic carbon transporter (TC 9.A.2) DabA family. As to quaternary structure, forms a complex with DabB. The cofactor is Zn(2+).

It is found in the cell inner membrane. In terms of biological role, part of an energy-coupled inorganic carbon pump. This chain is Probable inorganic carbon transporter subunit DabA 2, found in Nitrobacter hamburgensis (strain DSM 10229 / NCIMB 13809 / X14).